The chain runs to 681 residues: Glycogen-binding subunit 76A (681 aa).

Disordered regions lie at residues 1-20, 53-94, 232-251, 285-391, and 405-435; these read MNDP…SRPP, LGSQ…DLQP, SLTE…NGHL, FADR…ASNL, and QDAT…CRPQ. Residues 59-69 show a composition bias toward acidic residues; the sequence is EEGEGNAEDEP. The span at 72–91 shows a compositional bias: polar residues; that stretch reads NGTSTNTWVNSHDSEQTVTD. Composition is skewed to basic and acidic residues over residues 237-251, 297-308, and 321-336; these read EQTK…NGHL, RVQKESSQERVP, and PSDR…RVQE. The segment covering 353 to 364 has biased composition (polar residues); the sequence is TESISTEVTTLE. The segment covering 365-374 has biased composition (basic and acidic residues); the sequence is RSPEESRNDE. A CBM21 domain is found at 525–632; the sequence is AVREKQVSLE…NNYGANYCFQ (108 aa). Thr-545 bears the Phosphothreonine mark. Phosphoserine occurs at positions 547 and 549.

This chain is Glycogen-binding subunit 76A (Gbs-76A), found in Drosophila melanogaster (Fruit fly).